The primary structure comprises 557 residues: Beta-amylase 2, chloroplastic (557 aa).

A chloroplast-targeting transit peptide spans 1–38; the sequence is MMSLNLAHQTGAAAAVAPAAPRTAVVAAAAGTVSAPAV. Residues Asp135, His175, and Asp183 each contribute to the substrate site. Glu267 (proton donor) is an active-site residue. Residues Lys380, His385, and Thr427 each contribute to the substrate site. The Proton acceptor role is filled by Glu465. Substrate is bound by residues 466–467 and Arg499; that span reads NA.

The protein belongs to the glycosyl hydrolase 14 family.

Its subcellular location is the plastid. It localises to the chloroplast. It catalyses the reaction Hydrolysis of (1-&gt;4)-alpha-D-glucosidic linkages in polysaccharides so as to remove successive maltose units from the non-reducing ends of the chains.. Possesses beta-amylase activity in vitro. May be involved in cold resistance by mediating the accumulation of maltose upon freezing stress, thus contributing to the protection of membranes. This Oryza sativa subsp. japonica (Rice) protein is Beta-amylase 2, chloroplastic.